Reading from the N-terminus, the 240-residue chain is Glutathione-independent glyoxalase hsp3102 (240 aa).

Catalysis depends on residues Cys-141, His-142, and Glu-175.

Belongs to the peptidase C56 family. HSP31-like subfamily.

Its subcellular location is the cytoplasm. The protein resides in the nucleus. It catalyses the reaction methylglyoxal + H2O = (R)-lactate + H(+). Catalyzes the conversion of methylglyoxal (MG) to D-lactate in a single glutathione (GSH)-independent step. May play a role in detoxifying endogenously produced glyoxals. Involved in protection against reactive oxygen species (ROS). The chain is Glutathione-independent glyoxalase hsp3102 from Schizosaccharomyces pombe (strain 972 / ATCC 24843) (Fission yeast).